Reading from the N-terminus, the 60-residue chain is Large ribosomal subunit protein bL32 (60 aa).

Belongs to the bacterial ribosomal protein bL32 family.

In Clostridium novyi (strain NT), this protein is Large ribosomal subunit protein bL32.